We begin with the raw amino-acid sequence, 113 residues long: Probable 4-amino-4-deoxy-L-arabinose-phosphoundecaprenol flippase subunit ArnE (113 aa).

The next 3 helical transmembrane spans lie at 37–57, 62–82, and 91–111; these read SALK…LFWL, ILPL…VTLA, and AGIK…LMSL. The EamA domain maps to 45-111; that stretch reads AVILLAVGML…IMLGILLMSL (67 aa).

Belongs to the ArnE family. In terms of assembly, heterodimer of ArnE and ArnF.

Its subcellular location is the cell inner membrane. The protein operates within bacterial outer membrane biogenesis; lipopolysaccharide biosynthesis. Translocates 4-amino-4-deoxy-L-arabinose-phosphoundecaprenol (alpha-L-Ara4N-phosphoundecaprenol) from the cytoplasmic to the periplasmic side of the inner membrane. The protein is Probable 4-amino-4-deoxy-L-arabinose-phosphoundecaprenol flippase subunit ArnE of Photorhabdus laumondii subsp. laumondii (strain DSM 15139 / CIP 105565 / TT01) (Photorhabdus luminescens subsp. laumondii).